Here is a 564-residue protein sequence, read N- to C-terminus: Proline--tRNA ligase (564 aa).

It belongs to the class-II aminoacyl-tRNA synthetase family. ProS type 1 subfamily. As to quaternary structure, homodimer.

It is found in the cytoplasm. The enzyme catalyses tRNA(Pro) + L-proline + ATP = L-prolyl-tRNA(Pro) + AMP + diphosphate. Its function is as follows. Catalyzes the attachment of proline to tRNA(Pro) in a two-step reaction: proline is first activated by ATP to form Pro-AMP and then transferred to the acceptor end of tRNA(Pro). As ProRS can inadvertently accommodate and process non-cognate amino acids such as alanine and cysteine, to avoid such errors it has two additional distinct editing activities against alanine. One activity is designated as 'pretransfer' editing and involves the tRNA(Pro)-independent hydrolysis of activated Ala-AMP. The other activity is designated 'posttransfer' editing and involves deacylation of mischarged Ala-tRNA(Pro). The misacylated Cys-tRNA(Pro) is not edited by ProRS. The sequence is that of Proline--tRNA ligase from Xylella fastidiosa (strain Temecula1 / ATCC 700964).